Consider the following 217-residue polypeptide: Meiotically up-regulated gene 37 protein (217 aa).

In terms of biological role, has a role in meiosis. This Schizosaccharomyces pombe (strain 972 / ATCC 24843) (Fission yeast) protein is Meiotically up-regulated gene 37 protein (mug37).